The primary structure comprises 861 residues: Protein argonaute-4 (861 aa).

One can recognise a PAZ domain in the interval 219–338 (PIIEFMCEVL…LPLEVCNIVA (120 aa)). Residues 509-820 (LIVVILPGKT…VAFRARYHLV (312 aa)) enclose the Piwi domain. The disordered stretch occupies residues 825 to 846 (DSAEGSHVSGQSNGRDPQALAK).

The protein belongs to the argonaute family. Ago subfamily. In terms of assembly, interacts with EIF4B, IMP8, PRMT5, TNRC6A and TNRC6B. Interacts with ZFP36. In terms of processing, ubiquitinated on surface-exposed lysines by a SCF-like E3 ubiquitin-protein ligase complex containing ZSWIM8 during target-directed microRNA degradation (TDMD), a process that mediates degradation of microRNAs (miRNAs). Ubiquitination by the SCF-like E3 ubiquitin-protein ligase complex containing ZSWIM8 leads to its subsequent degradation, thereby exposing miRNAs for degradation. ZSWIM8 recognizes and binds AGO4 when it is engaged with a TDMD target.

Its subcellular location is the cytoplasm. It localises to the P-body. In terms of biological role, required for RNA-mediated gene silencing (RNAi). Binds to short RNAs such as microRNAs (miRNAs) and represses the translation of mRNAs which are complementary to them. Lacks endonuclease activity and does not appear to cleave target mRNAs. In Mus musculus (Mouse), this protein is Protein argonaute-4 (Ago4).